We begin with the raw amino-acid sequence, 109 residues long: Large ribosomal subunit protein uL23 (109 aa).

The protein belongs to the universal ribosomal protein uL23 family. Part of the 50S ribosomal subunit. Contacts protein L29, and trigger factor when it is bound to the ribosome.

In terms of biological role, one of the early assembly proteins it binds 23S rRNA. One of the proteins that surrounds the polypeptide exit tunnel on the outside of the ribosome. Forms the main docking site for trigger factor binding to the ribosome. This Aquifex pyrophilus protein is Large ribosomal subunit protein uL23.